A 201-amino-acid chain; its full sequence is Ribosome maturation factor RimP (201 aa).

It belongs to the RimP family.

Its subcellular location is the cytoplasm. Required for maturation of 30S ribosomal subunits. In Rhizobium leguminosarum bv. trifolii (strain WSM2304), this protein is Ribosome maturation factor RimP.